The chain runs to 207 residues: Protein N-terminal glutamine amidohydrolase (207 aa).

Active-site residues include Cys30, His83, and Asp99.

Belongs to the NTAQ1 family. As to quaternary structure, monomer.

The protein resides in the cytoplasm. It localises to the cytosol. Its subcellular location is the nucleus. The catalysed reaction is N-terminal L-glutaminyl-[protein] + H2O = N-terminal L-glutamyl-[protein] + NH4(+). Mediates the side-chain deamidation of N-terminal glutamine residues to glutamate, an important step in N-end rule pathway of protein degradation. Conversion of the resulting N-terminal glutamine to glutamate renders the protein susceptible to arginylation, polyubiquitination and degradation as specified by the N-end rule. Does not act on substrates with internal or C-terminal glutamine and does not act on non-glutamine residues in any position. Does not deaminate acetylated N-terminal glutamine. With the exception of proline, all tested second-position residues on substrate peptides do not greatly influence the activity. In contrast, a proline at position 2, virtually abolishes deamidation of N-terminal glutamine. This is Protein N-terminal glutamine amidohydrolase (NTAQ1) from Bos taurus (Bovine).